The sequence spans 479 residues: Ribosomal RNA small subunit methyltransferase F (479 aa).

S-adenosyl-L-methionine contacts are provided by residues 125–131 (AAAPGSK), Glu-149, Asp-176, and Asp-194. The Nucleophile role is filled by Cys-247.

Belongs to the class I-like SAM-binding methyltransferase superfamily. RsmB/NOP family.

It localises to the cytoplasm. It carries out the reaction cytidine(1407) in 16S rRNA + S-adenosyl-L-methionine = 5-methylcytidine(1407) in 16S rRNA + S-adenosyl-L-homocysteine + H(+). Functionally, specifically methylates the cytosine at position 1407 (m5C1407) of 16S rRNA. The sequence is that of Ribosomal RNA small subunit methyltransferase F from Escherichia coli O157:H7 (strain EC4115 / EHEC).